A 235-amino-acid chain; its full sequence is Leucyl/phenylalanyl-tRNA--protein transferase (235 aa).

Belongs to the L/F-transferase family.

The protein resides in the cytoplasm. It catalyses the reaction N-terminal L-lysyl-[protein] + L-leucyl-tRNA(Leu) = N-terminal L-leucyl-L-lysyl-[protein] + tRNA(Leu) + H(+). It carries out the reaction N-terminal L-arginyl-[protein] + L-leucyl-tRNA(Leu) = N-terminal L-leucyl-L-arginyl-[protein] + tRNA(Leu) + H(+). The enzyme catalyses L-phenylalanyl-tRNA(Phe) + an N-terminal L-alpha-aminoacyl-[protein] = an N-terminal L-phenylalanyl-L-alpha-aminoacyl-[protein] + tRNA(Phe). Its function is as follows. Functions in the N-end rule pathway of protein degradation where it conjugates Leu, Phe and, less efficiently, Met from aminoacyl-tRNAs to the N-termini of proteins containing an N-terminal arginine or lysine. The chain is Leucyl/phenylalanyl-tRNA--protein transferase from Cellvibrio japonicus (strain Ueda107) (Pseudomonas fluorescens subsp. cellulosa).